The primary structure comprises 143 residues: Large ribosomal subunit protein uL11 (143 aa).

It belongs to the universal ribosomal protein uL11 family. As to quaternary structure, part of the ribosomal stalk of the 50S ribosomal subunit. Interacts with L10 and the large rRNA to form the base of the stalk. L10 forms an elongated spine to which L12 dimers bind in a sequential fashion forming a multimeric L10(L12)X complex. One or more lysine residues are methylated.

In terms of biological role, forms part of the ribosomal stalk which helps the ribosome interact with GTP-bound translation factors. The chain is Large ribosomal subunit protein uL11 from Acidovorax ebreus (strain TPSY) (Diaphorobacter sp. (strain TPSY)).